The primary structure comprises 395 residues: Cyclic AMP-responsive element-binding protein 3-like protein 4 (395 aa).

The Cytoplasmic portion of the chain corresponds to 1 to 295; it reads MDLGIPDLLD…QTSNKAAQTS (295 aa). The disordered stretch occupies residues 82-108; it reads EASPGSDSGISEDPCHPDSPPAPRATS. The region spanning 217–280 is the bZIP domain; sequence VLKKVRRKIR…ISLVAQLRQL (64 aa). Residues 219–248 are basic motif; the sequence is KKVRRKIRNKQSAQDSRRRKKEYIDGLESR. Positions 259–280 are leucine-zipper; the sequence is LQKKVQELERHNISLVAQLRQL. Residues 296-316 traverse the membrane as a helical; Signal-anchor for type II membrane protein segment; that stretch reads TCVLILLFSLALIILPSFSPF. Topologically, residues 317 to 395 are lumenal; the sequence is QSRPEAGSED…IRSVLHADEM (79 aa). The interval 355–395 is disordered; that stretch reads RLREPPGAKDANGSTRTLLEKMGGKPRPSGRIRSVLHADEM. Asn-366 carries N-linked (GlcNAc...) asparagine glycosylation.

The protein belongs to the bZIP family. ATF subfamily. As to quaternary structure, binds DNA as a dimer. Post-translationally, N-glycosylated in the C-terminal region. In terms of processing, controlled by regulated intramembrane proteolysis (RIP). Following ER stress a fragment containing the cytoplasmic transcription factor domain is released by proteolysis. The cleavage seems to be performed sequentially by site-1 and site-2 proteases (PS1 and PS2). PS1 cleavage may be suppressed by a determinant in the C-terminal region. According to PubMed:11830526, exclusively expressed in the prostate. Expressed in breast and prostate cancer cell lines. Expressed in prostatic luminal epithelial cells (at protein level). Expression is significantly more abundant in prostate cancer than in benign prostatic tissue (prostatic hyperplasia). According to PubMed:12111373, also expressed in brain, pancreas and skeletal muscle, and at lower levels in small intestine, testis, leukocyte and thymus.

The protein resides in the endoplasmic reticulum membrane. Its subcellular location is the golgi apparatus membrane. The protein localises to the nucleus. In terms of biological role, transcriptional activator that may play a role in the unfolded protein response. Binds to the UPR element (UPRE) but not to CRE element. Preferentially binds DNA with to the consensus sequence 5'-T[GT]ACGT[GA][GT]-3' and has transcriptional activation activity from UPRE. Binds to NF-kappa-B site and has transcriptional activation activity from NF-kappa-B-containing regulatory elements. The sequence is that of Cyclic AMP-responsive element-binding protein 3-like protein 4 (CREB3L4) from Homo sapiens (Human).